Reading from the N-terminus, the 151-residue chain is MKKEEMLVAAIRNGIVIDHIPPTKLFKVATLLQLDDLDKRITIGNNLRSRSHGSKGVIKIEDKTFEEEELNRIALIAPNVRLNIIRDYEVVEKRQVEVPHEIVGLVRCPNPKCITNNEPMQTRFRVIDAEQCTLRCDYCERKLAGDRIELL.

4 residues coordinate Zn(2+): cysteine 108, cysteine 113, cysteine 136, and cysteine 139.

The protein belongs to the PyrI family. As to quaternary structure, contains catalytic and regulatory chains. It depends on Zn(2+) as a cofactor.

In terms of biological role, involved in allosteric regulation of aspartate carbamoyltransferase. The polypeptide is Aspartate carbamoyltransferase regulatory chain (Porphyromonas gingivalis (strain ATCC 33277 / DSM 20709 / CIP 103683 / JCM 12257 / NCTC 11834 / 2561)).